The primary structure comprises 210 residues: ESCRT-III complex subunit did4 (210 aa).

The interval 1-38 is disordered; that stretch reads MGLTSWLFGGGKSPQEQLRAHQRSLGRAERELDRERTK. Positions 15 to 97 form a coiled coil; sequence QEQLRAHQRS…AISLRLQTMR (83 aa). Residues 26–38 are compositionally biased toward basic and acidic residues; the sequence is GRAERELDRERTK.

The protein belongs to the SNF7 family. Core component of the ESCRT-III complex (endosomal sorting required for transport complex III). ESCRT-III appears to be sequentially assembled as a flat lattice on the endosome membrane.

Its subcellular location is the cytoplasm. The protein resides in the endosome membrane. Required for the sorting and concentration of proteins resulting in the entry of these proteins into the invaginating vesicles of the multivesicular body (MVB). Acts a component of the ESCRT-III complex, which appears to be critical for late steps in MVB sorting, such as membrane invagination and final cargo sorting and recruitment of late-acting components of the sorting machinery. The MVB pathway requires the sequential function of ESCRT-O, -I,-II and -III complex assemblies. This chain is ESCRT-III complex subunit did4 (did4), found in Schizosaccharomyces pombe (strain 972 / ATCC 24843) (Fission yeast).